A 496-amino-acid chain; its full sequence is Nucleolar and spindle-associated protein 1-B (496 aa).

3 disordered regions span residues 44-206 (YPES…HEAH), 250-294 (TPVS…STAN), and 338-496 (KSSS…VPVK). The segment covering 56-69 (GCTSLTDTDELNSS) has biased composition (polar residues). Basic and acidic residues predominate over residues 121–134 (TQDKDCLESKKKEV). Over residues 150–159 (QDTSKQNNSE) the composition is skewed to polar residues. A compositionally biased stretch (low complexity) spans 261–281 (SRLSLLSPLPRTTGASPSRTP). Composition is skewed to polar residues over residues 376-396 (NTTI…NKAN) and 403-423 (AQNT…QASL). A compositionally biased stretch (low complexity) spans 447–459 (SGSNSNVSVLKNN). The segment covering 467 to 485 (TREERRKQHELDRKGKRDQ) has biased composition (basic and acidic residues).

Belongs to the NUSAP family. Interacts with DNA, microtubules, ipo7, kpna2 and kpnb1. Microtubule stabilization is inhibited by ipo7 and kpna2, while microtubule bundling is inhibited by kpnb1. Active GTP-bound ran causes dissociation of ipo7 and kpnb1.

Its subcellular location is the cytoplasm. It is found in the nucleus. The protein resides in the cytoskeleton. It localises to the spindle. Functionally, microtubule-associated protein with the capacity to bundle and stabilize microtubules. May associate with chromosomes and promote the organization of meiotic or mitotic spindle microtubules around them. This Xenopus laevis (African clawed frog) protein is Nucleolar and spindle-associated protein 1-B (nusap1-b).